Consider the following 190-residue polypeptide: MQLLVRVPSLPERGELDCNICYRPFNLGCRAPRRLPGTARARCGHTICTACLRELAARGDGGGAAARVVRLRRVVTCPFCRAPSQLPRGGLTEMALDSDLWSRLEEKARAKCERDEAGNPAKESSDADGEAEEEGESEKGAGPRSAGWRALRRLWDRVLGPARRWRRPLPSNVLYCAEIKDIGHLTRCTL.

An RING-type zinc finger spans residues 18 to 81; sequence CNICYRPFNL…RRVVTCPFCR (64 aa). Positions 111–145 are disordered; it reads KCERDEAGNPAKESSDADGEAEEEGESEKGAGPRS. A compositionally biased stretch (acidic residues) spans 126–136; sequence DADGEAEEEGE.

In Homo sapiens (Human), this protein is RING finger protein 227.